A 190-amino-acid chain; its full sequence is Imidazoleglycerol-phosphate dehydratase (190 aa).

It belongs to the imidazoleglycerol-phosphate dehydratase family.

It localises to the cytoplasm. The catalysed reaction is D-erythro-1-(imidazol-4-yl)glycerol 3-phosphate = 3-(imidazol-4-yl)-2-oxopropyl phosphate + H2O. Its pathway is amino-acid biosynthesis; L-histidine biosynthesis; L-histidine from 5-phospho-alpha-D-ribose 1-diphosphate: step 6/9. The protein is Imidazoleglycerol-phosphate dehydratase of Sulfurimonas denitrificans (strain ATCC 33889 / DSM 1251) (Thiomicrospira denitrificans (strain ATCC 33889 / DSM 1251)).